The sequence spans 102 residues: Citrate lyase acyl carrier protein (102 aa).

Position 14 is an O-(phosphoribosyl dephospho-coenzyme A)serine (Ser14).

This sequence belongs to the CitD family. Oligomer with a subunit composition of (alpha,beta,gamma)6.

Its subcellular location is the cytoplasm. Its function is as follows. Covalent carrier of the coenzyme of citrate lyase. This chain is Citrate lyase acyl carrier protein, found in Streptococcus equi subsp. equi (strain 4047).